Here is a 219-residue protein sequence, read N- to C-terminus: Protein-L-isoaspartate O-methyltransferase (219 aa).

The active site involves S67.

The protein belongs to the methyltransferase superfamily. L-isoaspartyl/D-aspartyl protein methyltransferase family.

It localises to the cytoplasm. It catalyses the reaction [protein]-L-isoaspartate + S-adenosyl-L-methionine = [protein]-L-isoaspartate alpha-methyl ester + S-adenosyl-L-homocysteine. In terms of biological role, catalyzes the methyl esterification of L-isoaspartyl residues in peptides and proteins that result from spontaneous decomposition of normal L-aspartyl and L-asparaginyl residues. It plays a role in the repair and/or degradation of damaged proteins. The protein is Protein-L-isoaspartate O-methyltransferase of Cereibacter sphaeroides (strain ATCC 17029 / ATH 2.4.9) (Rhodobacter sphaeroides).